Consider the following 91-residue polypeptide: Small ribosomal subunit protein bS20 (91 aa).

The segment covering 1 to 18 (MPLHKSAEKRLRQSEKRN) has biased composition (basic and acidic residues). Residues 1 to 24 (MPLHKSAEKRLRQSEKRNVRNRAR) are disordered.

The protein belongs to the bacterial ribosomal protein bS20 family.

Functionally, binds directly to 16S ribosomal RNA. The sequence is that of Small ribosomal subunit protein bS20 from Chlorobium phaeobacteroides (strain DSM 266 / SMG 266 / 2430).